Reading from the N-terminus, the 237-residue chain is tRNA1(Val) (adenine(37)-N6)-methyltransferase (237 aa).

Belongs to the methyltransferase superfamily. tRNA (adenine-N(6)-)-methyltransferase family.

The protein resides in the cytoplasm. The catalysed reaction is adenosine(37) in tRNA1(Val) + S-adenosyl-L-methionine = N(6)-methyladenosine(37) in tRNA1(Val) + S-adenosyl-L-homocysteine + H(+). Specifically methylates the adenine in position 37 of tRNA(1)(Val) (anticodon cmo5UAC). This Pasteurella multocida (strain Pm70) protein is tRNA1(Val) (adenine(37)-N6)-methyltransferase.